We begin with the raw amino-acid sequence, 253 residues long: Sulfate transporter CysZ (253 aa).

A run of 4 helical transmembrane segments spans residues 31–51, 75–95, 151–171, and 222–242; these read FVIL…WWLF, LLWP…FSTI, IVLL…PVLW, and IPLL…AMWV.

The protein belongs to the CysZ family.

It is found in the cell inner membrane. High affinity, high specificity proton-dependent sulfate transporter, which mediates sulfate uptake. Provides the sulfur source for the cysteine synthesis pathway. In Escherichia coli O81 (strain ED1a), this protein is Sulfate transporter CysZ.